Consider the following 175-residue polypeptide: Large ribosomal subunit protein uL10 (175 aa).

It belongs to the universal ribosomal protein uL10 family. Part of the ribosomal stalk of the 50S ribosomal subunit. The N-terminus interacts with L11 and the large rRNA to form the base of the stalk. The C-terminus forms an elongated spine to which L12 dimers bind in a sequential fashion forming a multimeric L10(L12)X complex.

Functionally, forms part of the ribosomal stalk, playing a central role in the interaction of the ribosome with GTP-bound translation factors. The sequence is that of Large ribosomal subunit protein uL10 from Delftia acidovorans (strain DSM 14801 / SPH-1).